The primary structure comprises 37 residues: MKVNPSVKRICEKCKVIRRNGRVRVICENPRHKQVQG.

Belongs to the bacterial ribosomal protein bL36 family.

The sequence is that of Large ribosomal subunit protein bL36A from Clavibacter sepedonicus (Clavibacter michiganensis subsp. sepedonicus).